A 493-amino-acid polypeptide reads, in one-letter code: Cysteine--tRNA ligase (493 aa).

Residue C29 participates in Zn(2+) binding. Residues 31–41 (VTVYDLCHLGH) carry the 'HIGH' region motif. Zn(2+)-binding residues include C213, H238, and E242. The short motif at 270 to 274 (KMSKS) is the 'KMSKS' region element. An ATP-binding site is contributed by K273.

It belongs to the class-I aminoacyl-tRNA synthetase family. In terms of assembly, monomer. Requires Zn(2+) as cofactor.

It is found in the cytoplasm. The catalysed reaction is tRNA(Cys) + L-cysteine + ATP = L-cysteinyl-tRNA(Cys) + AMP + diphosphate. The chain is Cysteine--tRNA ligase from Parasynechococcus marenigrum (strain WH8102).